The chain runs to 737 residues: Translation initiation factor IF-2 (737 aa).

The segment covering 69–80 (EKKEEKPIRKIM) has biased composition (basic and acidic residues). Positions 69-130 (EKKEEKPIRK…HKNKGKKKKG (62 aa)) are disordered. Basic residues-rich tracts occupy residues 95-108 (NNKKAKFQQTKNKK) and 121-130 (HKNKGKKKKG). The region spanning 237–404 (ERPPVITIMG…TILITAEILE (168 aa)) is the tr-type G domain. Residues 246–253 (GHVDHGKT) are G1. 246 to 253 (GHVDHGKT) is a GTP binding site. Residues 271-275 (GITQK) form a G2 region. Residues 292–295 (DTPG) are G3. Residues 292 to 296 (DTPGH) and 346 to 349 (NKID) contribute to the GTP site. Residues 346–349 (NKID) are G4. A G5 region spans residues 382 to 384 (SAK).

Belongs to the TRAFAC class translation factor GTPase superfamily. Classic translation factor GTPase family. IF-2 subfamily.

The protein resides in the cytoplasm. In terms of biological role, one of the essential components for the initiation of protein synthesis. Protects formylmethionyl-tRNA from spontaneous hydrolysis and promotes its binding to the 30S ribosomal subunits. Also involved in the hydrolysis of GTP during the formation of the 70S ribosomal complex. In Fusobacterium nucleatum subsp. nucleatum (strain ATCC 25586 / DSM 15643 / BCRC 10681 / CIP 101130 / JCM 8532 / KCTC 2640 / LMG 13131 / VPI 4355), this protein is Translation initiation factor IF-2.